A 512-amino-acid polypeptide reads, in one-letter code: Serine/threonine-protein kinase BSK1 (512 aa).

Gly2 carries N-myristoyl glycine lipidation. A disordered region spans residues Phe8 to Gly48. A compositionally biased stretch (gly residues) spans Gly38 to Gly48. The Protein kinase domain occupies Asp76–Gln331. Residues Ser82–Val90 and Lys104 each bind ATP. Asp198 acts as the Proton acceptor in catalysis. Ser230 is modified (phosphoserine). Residues Ala483–Gly508 are a coiled coil.

It belongs to the protein kinase superfamily. Ser/Thr protein kinase family. Interacts with BRI1. Interacts with ASK7/BIN2, BSK5, BSK6, BSK8 and BSK11. Interacts with FLS2. Phosphorylated at Ser-230 by BRI1 upon brassinolide (BL) treatment. Phosphorylation at Ser-230 weakens the interaction between BSK1 and BRI1. Phosphorylated by ASK7/BIN2 and ASK9/BIL2.

Its subcellular location is the cell membrane. The enzyme catalyses L-seryl-[protein] + ATP = O-phospho-L-seryl-[protein] + ADP + H(+). The catalysed reaction is L-threonyl-[protein] + ATP = O-phospho-L-threonyl-[protein] + ADP + H(+). Serine/threonine kinase that acts as a positive regulator of brassinosteroid (BR) signaling downstream of the receptor kinase BRI1. Mediates signal transduction from BRI1 by functioning as substrate of BRI1. Functions as a positive regulator of plant immunity. May be involved in the regulation of pattern-triggered immunity (PTI) downstream of the flagellin receptor FLS2. Possesses kinase activity in vitro. Kinase activity is required for its function in innate immunity. The protein is Serine/threonine-protein kinase BSK1 of Arabidopsis thaliana (Mouse-ear cress).